The following is a 594-amino-acid chain: Isocitrate dehydrogenase kinase/phosphatase (594 aa).

ATP contacts are provided by residues 315–321 (APGIRGM) and Lys336. Residue Asp371 is part of the active site.

It belongs to the AceK family.

It localises to the cytoplasm. The catalysed reaction is L-seryl-[isocitrate dehydrogenase] + ATP = O-phospho-L-seryl-[isocitrate dehydrogenase] + ADP + H(+). Functionally, bifunctional enzyme which can phosphorylate or dephosphorylate isocitrate dehydrogenase (IDH) on a specific serine residue. This is a regulatory mechanism which enables bacteria to bypass the Krebs cycle via the glyoxylate shunt in response to the source of carbon. When bacteria are grown on glucose, IDH is fully active and unphosphorylated, but when grown on acetate or ethanol, the activity of IDH declines drastically concomitant with its phosphorylation. In Klebsiella pneumoniae subsp. pneumoniae (strain ATCC 700721 / MGH 78578), this protein is Isocitrate dehydrogenase kinase/phosphatase.